Reading from the N-terminus, the 643-residue chain is Threonine--tRNA ligase (643 aa).

Residues 1–61 (MIKITLKDGS…NEDSSLEICT (61 aa)) enclose the TGS domain. A catalytic region spans residues 240 to 540 (DHNKLGRELG…LIEKYAGALP (301 aa)). The Zn(2+) site is built by C335, H386, and H517.

This sequence belongs to the class-II aminoacyl-tRNA synthetase family. In terms of assembly, homodimer. It depends on Zn(2+) as a cofactor.

It localises to the cytoplasm. The catalysed reaction is tRNA(Thr) + L-threonine + ATP = L-threonyl-tRNA(Thr) + AMP + diphosphate + H(+). Functionally, catalyzes the attachment of threonine to tRNA(Thr) in a two-step reaction: L-threonine is first activated by ATP to form Thr-AMP and then transferred to the acceptor end of tRNA(Thr). Also edits incorrectly charged L-seryl-tRNA(Thr). The protein is Threonine--tRNA ligase of Clostridium perfringens (strain ATCC 13124 / DSM 756 / JCM 1290 / NCIMB 6125 / NCTC 8237 / Type A).